The following is a 323-amino-acid chain: Calcium homeostasis modulator protein 2 (323 aa).

At 1-21 the chain is on the cytoplasmic side; that stretch reads MAALIAENFRFLSLFFKSKDV. The central pore stretch occupies residues 14-39; that stretch reads LFFKSKDVMIFNGLVALGTVGSQELF. A helical membrane pass occupies residues 22-43; sequence MIFNGLVALGTVGSQELFTVVA. The Extracellular segment spans residues 44–52; sequence FHCPCSPAR. 2 disulfide bridges follow: Cys46–Cys130 and Cys48–Cys162. The helical transmembrane segment at 53–76 threads the bilayer; the sequence is NYLYGLAAIGVPALALFLIGVILN. Topologically, residues 77 to 101 are cytoplasmic; sequence NHTWNLVAECQYRRTKNCSAAPNFL. Residues 102-132 form a helical membrane-spanning segment; it reads LLSSIVGRAAVAPVTWSVISLLRGEAYVCAL. The Extracellular portion of the chain corresponds to 133–179; sequence SEFVNPHSLMVGERSFPVAHATEILARFPCGEGPANLSVFREEVSRR. Positions 145 to 152 are hemichannel docking; that stretch reads ERSFPVAH. Residues 180-206 form a helical membrane-spanning segment; sequence LKYESQLFGWLLIGVVAILVFLTKCLK. The Cytoplasmic portion of the chain corresponds to 207–323; the sequence is HYCSPLSYRQ…DHVEMSLLPS (117 aa). The intersubunit interaction stretch occupies residues 214–251; that stretch reads YRQEAYWAQYRANEDQLFQRTAEVHSRVLAANNVRRFF.

Belongs to the CALHM family. As to quaternary structure, homo-undecamer. Two undecameric hemichannels can assemble in a head-to-head manner to form a gap junction.

Its subcellular location is the cell membrane. It catalyses the reaction ATP(in) = ATP(out). Pore-forming subunit of Ca(2+) homeostasis modulator channels. Mediates ATP release from astrocytes and ATP-induced Ca(2+) influx in microglia thus regulating neuronal ATP and Ca(2+) homeostasis, synaptic transmission and neuroinflammatory response. May form intercellular gap junctions. The gating mechanism remains unknown. This chain is Calcium homeostasis modulator protein 2 (CALHM2), found in Bos taurus (Bovine).